Here is a 900-residue protein sequence, read N- to C-terminus: Translation initiation factor IF-2 (900 aa).

Basic and acidic residues-rich tracts occupy residues alanine 119 to glutamate 158, alanine 165 to alanine 191, and glutamate 198 to valine 229. The tract at residues alanine 119–methionine 306 is disordered. Positions serine 257–serine 272 are enriched in low complexity. The 170-residue stretch at proline 400 to lysine 569 folds into the tr-type G domain. The tract at residues glycine 409 to threonine 416 is G1. A GTP-binding site is contributed by glycine 409–threonine 416. Residues glycine 434–histidine 438 are G2. Residues aspartate 455–glycine 458 are G3. GTP-binding positions include aspartate 455–histidine 459 and asparagine 509–aspartate 512. Residues asparagine 509–aspartate 512 are G4. The segment at serine 545–lysine 547 is G5.

The protein belongs to the TRAFAC class translation factor GTPase superfamily. Classic translation factor GTPase family. IF-2 subfamily.

Its subcellular location is the cytoplasm. Its function is as follows. One of the essential components for the initiation of protein synthesis. Protects formylmethionyl-tRNA from spontaneous hydrolysis and promotes its binding to the 30S ribosomal subunits. Also involved in the hydrolysis of GTP during the formation of the 70S ribosomal complex. This is Translation initiation factor IF-2 from Shewanella piezotolerans (strain WP3 / JCM 13877).